The primary structure comprises 213 residues: MAIPEAVTWDNLGSLMNNTQLNYFIPSHKNSIQYVCSDDKSRFSFVQCYLRILTLSIARFNEKSFDCSNQTIQNIYNLTMPGFFVQAPIPFCYDQNVANTKNCTLMLTSNDVMYWTYRQAVLNQPTFNNCMKPWKYIKFLSEKITNVNLTASQNIANSTMNFINRYINSSISMEKFLLTTIYNMAQPLGPRCSVEGLFSLSHYANKRLTERKN.

This chain is Protein ORF D, found in Elephas maximus (Indian elephant).